A 395-amino-acid chain; its full sequence is NAC domain-containing protein 7 (395 aa).

An NAC domain is found at 7–156 (VPPGFRFHPT…GWVVCRVFKK (150 aa)). A DNA-binding region spans residues 107–162 (IGMRKTLVFYKGRAPNGQKSDWIMHEYRLETDENGTPQEEGWVVCRVFKKRLAAVR). 2 stretches are compositionally biased toward polar residues: residues 344-362 (AATA…SNAE) and 382-395 (TAST…DLWK). A disordered region spans residues 344–395 (AATASASIQNNAKDTSNAEYQVDEEKDPKRASDMGEEYTASTSSSCQIDLWK).

This sequence belongs to the plant vascular related NAC-domain protein family. Interacts with NAC083/VNI2. As to expression, expressed in root, shoot and hypocotyl vascular elements, columella root caps, epidermal and cortex root cells and root-hypocotyl junctions. Observed predominantly in root imature xylem vessels. Present in root developing xylems. Specifically expressed in vessels in the secondary xylem of the root-hypocotyl region, and in vessels but not in interfascicular fibers in stems.

The protein localises to the nucleus. Functionally, transcription activator that binds to the secondary wall NAC binding element (SNBE), 5'-(T/A)NN(C/T)(T/C/G)TNNNNNNNA(A/C)GN(A/C/T)(A/T)-3', in the promoter of target genes. Involved in xylem formation by promoting the expression of secondary wall-associated transcription factors and of genes involved in secondary wall biosynthesis and programmed cell death, genes driven by the secondary wall NAC binding element (SNBE). Triggers thickening of secondary walls. This Arabidopsis thaliana (Mouse-ear cress) protein is NAC domain-containing protein 7.